The primary structure comprises 225 residues: 3-dehydroquinate dehydratase (225 aa).

3-dehydroquinate contacts are provided by residues serine 6, 30–32 (EWR), and arginine 62. The Proton donor/acceptor role is filled by histidine 118. The active-site Schiff-base intermediate with substrate is lysine 143. Residues arginine 186, threonine 205, and glutamine 209 each coordinate 3-dehydroquinate.

The protein belongs to the type-I 3-dehydroquinase family. In terms of assembly, homodimer.

The catalysed reaction is 3-dehydroquinate = 3-dehydroshikimate + H2O. It participates in metabolic intermediate biosynthesis; chorismate biosynthesis; chorismate from D-erythrose 4-phosphate and phosphoenolpyruvate: step 3/7. In terms of biological role, involved in the third step of the chorismate pathway, which leads to the biosynthesis of aromatic amino acids. Catalyzes the cis-dehydration of 3-dehydroquinate (DHQ) and introduces the first double bond of the aromatic ring to yield 3-dehydroshikimate. The sequence is that of 3-dehydroquinate dehydratase from Streptococcus gordonii (strain Challis / ATCC 35105 / BCRC 15272 / CH1 / DL1 / V288).